Here is a 1250-residue protein sequence, read N- to C-terminus: Bifunctional autolysin (1250 aa).

The first 29 residues, methionine 1–alanine 29, serve as a signal peptide directing secretion. A compositionally biased stretch (polar residues) spans glycine 103 to glycine 138. Disordered stretches follow at residues glycine 103 to asparagine 151 and alanine 173 to proline 219. The segment covering alanine 173 to threonine 196 has biased composition (low complexity). Residues alanine 199–lysine 769 form an N-acetylmuramoyl-L-alanine amidase region. 7 consecutive GW domains span residues threonine 437–alanine 511, serine 513–lysine 587, threonine 606–alanine 680, serine 682–alanine 756, threonine 778–leucine 853, lysine 855–alanine 930, and alanine 937–isoleucine 1011. The tract at residues alanine 770 to lysine 1250 is endo-beta-N-acetylglucosaminidase.

The protein in the N-terminal section; belongs to the N-acetylmuramoyl-L-alanine amidase 2 family. It in the C-terminal section; belongs to the glycosyl hydrolase 73 family. As to quaternary structure, oligomer; forms a ring structure at the cell surface which is important for efficient partitioning of daughter cells after cell division. Post-translationally, undergoes proteolytic processing to generate the two extracellular lytic enzymes, probably at the septal region on the cell surface.

The protein localises to the secreted. The catalysed reaction is Hydrolyzes the link between N-acetylmuramoyl residues and L-amino acid residues in certain cell-wall glycopeptides.. The enzyme catalyses an N(4)-(oligosaccharide-(1-&gt;3)-[oligosaccharide-(1-&gt;6)]-beta-D-Man-(1-&gt;4)-beta-D-GlcNAc-(1-&gt;4)-alpha-D-GlcNAc)-L-asparaginyl-[protein] + H2O = an oligosaccharide-(1-&gt;3)-[oligosaccharide-(1-&gt;6)]-beta-D-Man-(1-&gt;4)-D-GlcNAc + N(4)-(N-acetyl-beta-D-glucosaminyl)-L-asparaginyl-[protein]. Functionally, endohydrolysis of the di-N-acetylchitobiosyl unit in high-mannose glycopeptides and glycoproteins containing the -[(Man)5(GlcNAc)2]-Asn structure. One N-acetyl-D-glucosamine residue remains attached to the protein; the rest of the oligosaccharide is released intact. Cleaves the peptidoglycan connecting the daughter cells at the end of the cell division cycle, resulting in the separation of the two newly divided cells. Acts as an autolysin in penicillin-induced lysis. This Staphylococcus aureus (strain MSSA476) protein is Bifunctional autolysin (atl).